The sequence spans 244 residues: MTELVYEQPLNEKIRSYLRLEYLDKQLQSNLNHDHQHRCFYPLFSLCELSERCDYRNEVLKDIERHLLQLSKWQELDHVDHQQIDLYINALTQAREPLQKPDRFGSQLKQDRFISALRQRFGMPGACCNFDLPQLHYWLAKPWEEKQQDYRSWIAHFEPLLTPITLLLQLTRSTAHYDNAVAHAGFYQGDSAQALALVRVKVDASHGCYPTISGHKNRFAIHFVQFEQQRHSDRSIDFLLATCA.

This sequence belongs to the ZapD family. Interacts with FtsZ.

Its subcellular location is the cytoplasm. In terms of biological role, cell division factor that enhances FtsZ-ring assembly. Directly interacts with FtsZ and promotes bundling of FtsZ protofilaments, with a reduction in FtsZ GTPase activity. This Shewanella baltica (strain OS223) protein is Cell division protein ZapD.